The sequence spans 554 residues: Solute carrier family 22 member 2 (554 aa).

The Cytoplasmic segment spans residues 1–21; sequence MPTVDDILEQVGHFHFFQKQT. The helical transmembrane segment at 22–42 threads the bilayer; the sequence is FFLLALISAAFTPIYVGIVFL. Over 43–149 the chain is Extracellular; that stretch reads GFTPDHRCRS…LVCARSWMLD (107 aa). N-linked (GlcNAc...) asparagine glycosylation is present at Asn-71. The chain crosses the membrane as a helical span at residues 150 to 170; it reads LFQSAVNIGFFIGSVGIGYLA. At 171-176 the chain is on the cytoplasmic side; the sequence is DRFGRK. The chain crosses the membrane as a helical span at residues 177 to 197; that stretch reads LCLLVTILINAAAGVLMAVSP. Residue Asn-198 is glycosylated (N-linked (GlcNAc...) asparagine). The Extracellular portion of the chain corresponds to 198-209; it reads NYTWMLIFRLIQ. The helical transmembrane segment at 210 to 230 threads the bilayer; sequence GLVSKAGWLIGYILITEFVGL. The Cytoplasmic segment spans residues 231-237; it reads NYRRTVG. The helical transmembrane segment at 238–258 threads the bilayer; that stretch reads ILYQVAFTVGLLVLAGVAYAL. Topologically, residues 259-262 are extracellular; that stretch reads PRWR. The helical transmembrane segment at 263-283 threads the bilayer; it reads WLQLTVTLPYFCFLLYYWCIP. The Proline-rich sequence signature appears at 283–287; sequence PESPR. Residues 284-348 lie on the Cytoplasmic side of the membrane; the sequence is ESPRWLISQN…RTPQIRKHTC (65 aa). The chain crosses the membrane as a helical span at residues 349–369; sequence ILMYNWFTSSVLYQGLIMHLG. At 370 to 374 the chain is on the extracellular side; sequence LAGGD. Residues 375–395 traverse the membrane as a helical segment; it reads IYLDFFYSALVEFPAAFLIIA. Over 396-403 the chain is Cytoplasmic; that stretch reads TIDRVGRR. A helical transmembrane segment spans residues 404–424; that stretch reads YPWAVSNMVAGAACLASVFVP. Over 425 to 427 the chain is Extracellular; the sequence is DDL. The chain crosses the membrane as a helical span at residues 428 to 450; it reads QGLRITVACLGRMGITMAYEMVC. The Cytoplasmic segment spans residues 451–463; sequence LVNAELYPTFIRN. A helical transmembrane segment spans residues 464-484; sequence LGVLVCSSLCDVGGIVTPFLV. The Extracellular segment spans residues 485 to 493; that stretch reads YRLTAIWLQ. The chain crosses the membrane as a helical span at residues 494–514; it reads LPLVVFAVVGLVAGGLVLMLP. The Cytoplasmic portion of the chain corresponds to 515–554; the sequence is ETKGRTLPETIEEAENLQRPRKNREKVIYVHVRKADGPLT.

The protein belongs to the major facilitator (TC 2.A.1) superfamily. Organic cation transporter (TC 2.A.1.19) family. In terms of processing, tyrosine phosphorylated. Expressed in kidney.

Its subcellular location is the basolateral cell membrane. It is found in the basal cell membrane. It catalyses the reaction (R)-noradrenaline(out) = (R)-noradrenaline(in). The catalysed reaction is (R)-adrenaline(out) = (R)-adrenaline(in). It carries out the reaction serotonin(out) = serotonin(in). The enzyme catalyses dopamine(out) = dopamine(in). It catalyses the reaction histamine(out) = histamine(in). The catalysed reaction is thiamine(in) = thiamine(out). It carries out the reaction creatinine(in) = creatinine(out). The enzyme catalyses 1-methylnicotinamide(out) = 1-methylnicotinamide(in). It catalyses the reaction guanidine(out) = guanidine(in). The catalysed reaction is choline(out) = choline(in). It carries out the reaction agmatine(out) = agmatine(in). The enzyme catalyses putrescine(out) = putrescine(in). It catalyses the reaction spermidine(in) = spermidine(out). The catalysed reaction is tyramine(in) = tyramine(out). It carries out the reaction L-histidyl-L-proline diketopiperazine(in) = L-histidyl-L-proline diketopiperazine(out). The enzyme catalyses (R)-salsolinol(in) = (R)-salsolinol(out). It catalyses the reaction N-methyl-(R)-salsolinol(in) = N-methyl-(R)-salsolinol(out). The catalysed reaction is acetylcholine(in) = acetylcholine(out). It carries out the reaction prostaglandin F2alpha(out) = prostaglandin F2alpha(in). The enzyme catalyses prostaglandin E2(out) = prostaglandin E2(in). With respect to regulation, tyrosine phosphorylation of the transporter leads to activation of the transport activity. Inhibited by cGMP, most likely through a cGMP-binding protein that interacts with OCT2. Functionally, electrogenic voltage-dependent transporter that mediates the transport of a variety of organic cations such as endogenous bioactive amines, cationic drugs and xenobiotics. Functions as a Na(+)-independent, bidirectional uniporter. Cation cellular uptake or release is driven by the electrochemical potential, i.e. membrane potential and concentration gradient. However, may also engage electroneutral cation exchange when saturating concentrations of cation substrates are reached. Predominantly expressed at the basolateral membrane of hepatocytes and proximal tubules and involved in the uptake and disposition of cationic compounds by hepatic and renal clearance from the blood flow. Implicated in monoamine neurotransmitters uptake such as histamine, dopamine, adrenaline/epinephrine, noradrenaline/norepinephrine, serotonin and tyramine, thereby supporting a physiological role in the central nervous system by regulating interstitial concentrations of neurotransmitters. Also capable of transporting dopaminergic neuromodulators cyclo(his-pro), salsolinol and N-methyl-salsolinol, thereby involved in the maintenance of dopaminergic cell integrity in the central nervous system. Mediates the bidirectional transport of acetylcholine (ACh) at the apical membrane of ciliated cell in airway epithelium, thereby playing a role in luminal release of ACh from bronchial epithelium. Also transports guanidine and endogenous monoamines such as vitamin B1/thiamine, creatinine and N-1-methylnicotinamide (NMN). Mediates the uptake and efflux of quaternary ammonium compound choline. Mediates the bidirectional transport of polyamine agmatine and the uptake of polyamines putrescine and spermidine. Able to transport non-amine endogenous compounds such as prostaglandin E2 (PGE2) and prostaglandin F2-alpha (PGF2-alpha). Also involved in the uptake of xenobiotic 4-(4-(dimethylamino)styryl)-N-methylpyridinium (ASP). May contribute to regulate the transport of organic compounds in testis across the blood-testis-barrier. In Oryctolagus cuniculus (Rabbit), this protein is Solute carrier family 22 member 2 (SLC22A2).